Consider the following 886-residue polypeptide: MTLLTSSLLLFSLLTSRLEAIPVLEKSPAHPAHSAHPAHPAHPAHPAHPSPGVRILRAPESLVAPLGDEVVLECETSLQPERFEWSHRSSRSPGAGFKYLKTGTAKANVSQEAAISRLRVLVRPDTLGEYRCVGWFGPLVVTSTIARLELASTSLVDAQESESPLQWRVSAGNSVLWSCGQQVQSNPSASWSYYRNGVEIKPEFIGTNGNLFLSNVSSESSGSYSCQATNPASGERIQLPGSLQLQVTPEQRSESKSPHLLRGQPSSQEITIREGSSLLLLCPGVGSPPPTVVWSSPDVVGAVKNKRSKVFGHALEISNTRVNDAGTYICFQDNGVRPALEHYIKVHVEQPPQIVRPPWADLTNEGDRLKLECKATGVPTPEIYWLLNGHSSIDDSEAELSNNFLILHSVLKRHAGYVQCFARNRLGEHSAGTLLQVNPKQIQEPRESGGTHRPKPNQGSRQKQMYPPTPPNVTRLSDESVMLRWMVPRNDGLPIVIFKVQYRMVGKRKNWQTTNDNIPYGKPKWNSELGKSFTASVTDLKPQHTYRFRILAVYSNNDNKESNTSAKFYLQPGAALDPMPVPELLEIEEYSETAVVLHWSLASDADEHLITGYYAYYRPSSSAGEYFKATIEGAHARSFKIAPLETATMYEFKLQSFSAASASEFSALKQGRTQRPKTSTTEEPTLQMGDRDTTTPSHNETFNMSPMLTGTIGGGAVLILLLISTCFCVCRRRNSRSRGNNPNKPRMAELRDDFVPLGNCSPTKQRQRTRHIHITLNPLAQQQQQALEEKNDTDQDAPYYQRPSSYDYDPTLRRMSSSSLRRSQRTLERAGGSNGSNNGNNNNLNQSAEAGSIENPGKPGRVLMKRPRLSSRSENLSSGSLNSVGV.

Residues 1 to 20 (MTLLTSSLLLFSLLTSRLEA) form the signal peptide. Residues 21-709 (IPVLEKSPAH…ETFNMSPMLT (689 aa)) are Extracellular-facing. Low complexity predominate over residues 29–38 (AHPAHSAHPA). The disordered stretch occupies residues 29-52 (AHPAHSAHPAHPAHPAHPAHPSPG). 4 consecutive Ig-like C2-type domains span residues 51–148 (PGVR…IARL), 138–238 (PLVV…ERIQ), 258–346 (PHLL…YIKV), and 352–438 (PQIV…LQVN). 4 disulfide bridges follow: Cys-74–Cys-132, Cys-179–Cys-226, Cys-282–Cys-330, and Cys-373–Cys-420. Residues Asn-108 and Asn-215 are each glycosylated (N-linked (GlcNAc...) asparagine). The segment at 432–475 (GTLLQVNPKQIQEPRESGGTHRPKPNQGSRQKQMYPPTPPNVTR) is disordered. 2 Fibronectin type-III domains span residues 467–573 (PPTP…LQPG) and 581–676 (VPEL…TQRP). Asn-472 carries N-linked (GlcNAc...) asparagine glycosylation. Heparin is bound by residues Arg-503, Lys-507, Lys-509, and Arg-547. N-linked (GlcNAc...) asparagine glycosylation is present at Asn-563. Residues 668 to 697 (LKQGRTQRPKTSTTEEPTLQMGDRDTTTPS) form a disordered region. Residues 671 to 684 (GRTQRPKTSTTEEP) show a composition bias toward polar residues. An N-linked (GlcNAc...) asparagine glycan is attached at Asn-699. A helical transmembrane segment spans residues 710–730 (GTIGGGAVLILLLISTCFCVC). The Cytoplasmic segment spans residues 731-886 (RRRNSRSRGN…SSGSLNSVGV (156 aa)). Disordered regions lie at residues 734-768 (NSRS…QRQR) and 781-886 (QQQQ…SVGV). Low complexity-rich tracts occupy residues 829-843 (RAGG…NNNN) and 870-886 (SSRS…SVGV).

It belongs to the immunoglobulin superfamily. IHOG family. As to quaternary structure, homodimer. Heterotetramer; 2 iHog chains bind 2 hh chains when facilitated by heparin, heparin is required to promote high-affinity interactions between hh and iHog.

It is found in the membrane. Its function is as follows. Mediates response to the active Hedgehog (Hh) protein signal in embryos, functioning upstream or at the level of patched (ptc). The sequence is that of Interference hedgehog (ihog) from Drosophila melanogaster (Fruit fly).